The chain runs to 200 residues: TATA-box-binding protein 1 (200 aa).

Thr2 is subject to N-acetylthreonine. A run of 2 repeats spans residues 25-101 (LQNI…ARIV) and 115-192 (IQNI…YPVL).

This sequence belongs to the TBP family. In terms of assembly, belongs to the TFIID complex together with the TBP-associated factors (TAFs). Binds DNA as monomer. Interacts with TAF1 (via N-terminus). Interacts with MEE12/CCG1. Associates with PWP2 in the nucleus. Component of a nuclear protein complex containing at least TATA binding proteins (TBPs, e.g. TBP1 and TBP2) and ATX1.

The protein resides in the nucleus. In terms of biological role, general transcription factor that functions at the core of the DNA-binding multiprotein factor TFIID. Binding of TFIID to the TATA box is the initial transcriptional step of the pre-initiation complex (PIC), playing a role in the activation of eukaryotic genes transcribed by RNA polymerase II. The protein is TATA-box-binding protein 1 of Arabidopsis thaliana (Mouse-ear cress).